A 319-amino-acid polypeptide reads, in one-letter code: Probable arabinan endo-1,5-alpha-L-arabinosidase C (319 aa).

Residues 1–16 (MFVYTLIFLFLAAANA) form the signal peptide. The active-site Proton acceptor is Asp-31. The N-linked (GlcNAc...) asparagine glycan is linked to Asn-190. Catalysis depends on Glu-198, which acts as the Proton donor. Asn-222 carries N-linked (GlcNAc...) asparagine glycosylation.

This sequence belongs to the glycosyl hydrolase 43 family.

It is found in the secreted. It catalyses the reaction Endohydrolysis of (1-&gt;5)-alpha-arabinofuranosidic linkages in (1-&gt;5)-arabinans.. Its pathway is glycan metabolism; L-arabinan degradation. Its function is as follows. Endo-1,5-alpha-L-arabinanase involved in degradation of pectin. Its preferred substrate is linear 1,5-alpha-L-arabinan. The polypeptide is Probable arabinan endo-1,5-alpha-L-arabinosidase C (abnC) (Aspergillus clavatus (strain ATCC 1007 / CBS 513.65 / DSM 816 / NCTC 3887 / NRRL 1 / QM 1276 / 107)).